The primary structure comprises 83 residues: Vitellogenesis-inhibiting hormone (83 aa).

3 cysteine pairs are disulfide-bonded: C15/C52, C32/C48, and C35/C61.

In terms of tissue distribution, found in the sinus glands of both male and female. Found also in the brain; the neuroendocrine structures of the protocerebrum.

It localises to the secreted. Inhibits secondary vitellogenesis in females. Has no hyperglycemic or molt-inhibiting activity. The chain is Vitellogenesis-inhibiting hormone from Armadillidium vulgare (Pillbug).